Here is a 336-residue protein sequence, read N- to C-terminus: Fructose-1,6-bisphosphatase class 1 (336 aa).

Mg(2+)-binding residues include glutamate 98, aspartate 117, leucine 119, and aspartate 120. Substrate contacts are provided by residues 120 to 123 (DGSS), asparagine 210, and lysine 276. Glutamate 282 provides a ligand contact to Mg(2+).

It belongs to the FBPase class 1 family. Homotetramer. It depends on Mg(2+) as a cofactor.

It localises to the cytoplasm. The enzyme catalyses beta-D-fructose 1,6-bisphosphate + H2O = beta-D-fructose 6-phosphate + phosphate. It participates in carbohydrate biosynthesis; gluconeogenesis. The chain is Fructose-1,6-bisphosphatase class 1 from Caulobacter vibrioides (strain ATCC 19089 / CIP 103742 / CB 15) (Caulobacter crescentus).